Reading from the N-terminus, the 381-residue chain is Succinyl-diaminopimelate desuccinylase (381 aa).

His-69 is a Zn(2+) binding site. Residue Asp-71 is part of the active site. Asp-103 contacts Zn(2+). Glu-137 functions as the Proton acceptor in the catalytic mechanism. Zn(2+) is bound by residues Glu-138, Glu-166, and His-355.

It belongs to the peptidase M20A family. DapE subfamily. Homodimer. It depends on Zn(2+) as a cofactor. The cofactor is Co(2+).

The enzyme catalyses N-succinyl-(2S,6S)-2,6-diaminopimelate + H2O = (2S,6S)-2,6-diaminopimelate + succinate. Its pathway is amino-acid biosynthesis; L-lysine biosynthesis via DAP pathway; LL-2,6-diaminopimelate from (S)-tetrahydrodipicolinate (succinylase route): step 3/3. Its function is as follows. Catalyzes the hydrolysis of N-succinyl-L,L-diaminopimelic acid (SDAP), forming succinate and LL-2,6-diaminopimelate (DAP), an intermediate involved in the bacterial biosynthesis of lysine and meso-diaminopimelic acid, an essential component of bacterial cell walls. In Rickettsia felis (strain ATCC VR-1525 / URRWXCal2) (Rickettsia azadi), this protein is Succinyl-diaminopimelate desuccinylase.